The chain runs to 392 residues: MASVEEFRNAQRAKGPATILAIGTATPDHCVYQSDYADYYFRVTKSEHMTELKKKFNRICDKSMIKKRYIHLTEEMLEEHPNIGAYMAPSLNIRQEIITAEVPRLGRDAALKALKEWGQPKSKITHLVFCTTSGVEMPGADYKLANLLGLETSVRRVMLYHQGCYAGGTVLRTAKDLAENNAGARVLVVCSEITVVTFRGPSEDALDSLVGQALFGDGSSAVIVGSDPDVSIERPLFQLVSAAQTFIPNSAGAIAGNLREVGLTFHLWPNVPTLISENIEKCLTQAFDPLGISDWNSLFWIAHPGGPAILDAVEAKLNLEKKKLEATRHVLSEYGNMSSACVLFILDEMRKKSLKGENATTGEGLDWGVLFGFGPGLTIETVVLHSIPTVTN.

Residue 55–58 (KFNR) participates in substrate binding. Cysteine 164 is a catalytic residue. Residues leucine 267 and 305 to 307 (GGP) contribute to the substrate site.

This sequence belongs to the thiolase-like superfamily. Chalcone/stilbene synthases family. Homodimer.

Its subcellular location is the cytoplasm. The catalysed reaction is 4-coumaroyl-CoA + 3 malonyl-CoA + 3 H(+) = trans-resveratrol + 4 CO2 + 4 CoA. The protein operates within phytoalexin biosynthesis; 3,4',5-trihydroxystilbene biosynthesis; 3,4',5-trihydroxystilbene from trans-4-coumarate: step 2/2. Mediates resistance to pathogens which are sensitive to stilbenes. This Vitis vinifera (Grape) protein is Stilbene synthase 6 (STS).